The sequence spans 106 residues: MYAIVRSGGRQHKVAVGDIVEVDKISTAKVGDTVELSTLLVVDGDAVTSDPWVLDGIKVTAEIVDHHKGAKIDILRYKNKTGYRRRQGHRQQYTAIKVTGIPAAAK.

It belongs to the bacterial ribosomal protein bL21 family. Part of the 50S ribosomal subunit. Contacts protein L20.

Functionally, this protein binds to 23S rRNA in the presence of protein L20. This chain is Large ribosomal subunit protein bL21, found in Streptomyces griseus subsp. griseus (strain JCM 4626 / CBS 651.72 / NBRC 13350 / KCC S-0626 / ISP 5235).